A 235-amino-acid polypeptide reads, in one-letter code: Ferrous iron permease EfeU (235 aa).

The Periplasmic portion of the chain corresponds to 1–28 (MTSRSRQAAYSGIFINETTGEFPQKEQE). Residues 29–49 (LFEGIVAVIAVVILTWMVFWM) form a helical membrane-spanning segment. Over 50–77 (RKVSRNVKVQLEQAVDSALQRGNHHGWA) the chain is Cytoplasmic. The helical transmembrane segment at 78-98 (LVMMVFFAVAREGLESVFFLL) threads the bilayer. Residues 99 to 106 (AAFQQDVG) lie on the Periplasmic side of the membrane. The chain crosses the membrane as a helical span at residues 107-127 (IWPPLGAMLGLATAVVLGFLL). Over 128-138 (YWGGIRLNLGA) the chain is Cytoplasmic. A helical transmembrane segment spans residues 139-159 (FFKWTSLFILFVAAGLAAGAI). The Periplasmic portion of the chain corresponds to 160 to 177 (RAFHEAGLWNHFQEIAFD). Residues 178–198 (MSAVLSTHSLFGTLMEGIFGY) form a helical membrane-spanning segment. The Cytoplasmic portion of the chain corresponds to 199-203 (QEAPS). Residues 204–224 (VSEVAVWFIYLIPALVAFALP) form a helical membrane-spanning segment. Residues 225–235 (PRAGATASRSA) are Periplasmic-facing.

Belongs to the oxidase-dependent Fe transporter (OFeT) (TC 9.A.10.1) family. In terms of assembly, part of a ferrous iron transporter composed of EfeU, EfeO and EfeB.

The protein localises to the cell inner membrane. Uptake of Fe(2+) ions across the membrane. The polypeptide is Ferrous iron permease EfeU (efeU) (Shigella flexneri).